Consider the following 100-residue polypeptide: Small ribosomal subunit protein uS14c (100 aa).

This sequence belongs to the universal ribosomal protein uS14 family. Part of the 30S ribosomal subunit.

Its subcellular location is the plastid. In terms of biological role, binds 16S rRNA, required for the assembly of 30S particles. In Euglena longa (Euglenophycean alga), this protein is Small ribosomal subunit protein uS14c.